Here is a 217-residue protein sequence, read N- to C-terminus: MSDSTFSAKNLACVRGGRVVFAGLGFSLSAGGALVLLGPNGSGKSSLLRVLAGLLKPAHGLLAWNGEALAEDPEAHAARTHYLGHHDAVKPVLSVAENLRFWAHLHDPHAERAGRAVDAALSRFGLARLATIPGKMLSAGQKRRTNLARLLAAPSPLWLLDEPTTALDKASIKVLEDVLAEHRAAGGMVVLSTHADINMPGAQELHLDQFAVAEELP.

One can recognise an ABC transporter domain in the interval 6-215; that stretch reads FSAKNLACVR…HLDQFAVAEE (210 aa). An ATP-binding site is contributed by 38–45; that stretch reads GPNGSGKS.

The protein belongs to the ABC transporter superfamily. CcmA exporter (TC 3.A.1.107) family. The complex is composed of two ATP-binding proteins (CcmA) and two transmembrane proteins (CcmB).

It is found in the cell inner membrane. It catalyses the reaction heme b(in) + ATP + H2O = heme b(out) + ADP + phosphate + H(+). Part of the ABC transporter complex CcmAB involved in the biogenesis of c-type cytochromes; once thought to export heme, this seems not to be the case, but its exact role is uncertain. Responsible for energy coupling to the transport system. This Paramagnetospirillum magneticum (strain ATCC 700264 / AMB-1) (Magnetospirillum magneticum) protein is Cytochrome c biogenesis ATP-binding export protein CcmA.